Consider the following 72-residue polypeptide: uncharacterized protein (72 aa).

The protein resides in the plastid. Its subcellular location is the chloroplast. This is an uncharacterized protein from Oenothera berteroana (Bertero's evening primrose).